The following is a 252-amino-acid chain: Probable transcriptional regulatory protein Npun_R5651 (252 aa).

The protein belongs to the TACO1 family.

It is found in the cytoplasm. The polypeptide is Probable transcriptional regulatory protein Npun_R5651 (Nostoc punctiforme (strain ATCC 29133 / PCC 73102)).